A 247-amino-acid polypeptide reads, in one-letter code: V-type proton ATPase subunit D (247 aa).

It belongs to the V-ATPase D subunit family. In terms of assembly, V-ATPase is a heteromultimeric enzyme made up of two complexes: the ATP-hydrolytic V1 complex and the proton translocation V0 complex. The V1 complex consists of three catalytic AB heterodimers that form a heterohexamer, three peripheral stalks each consisting of EG heterodimers, one central rotor including subunits D and F, and the regulatory subunits C and H. The proton translocation complex V0 consists of the proton transport subunit a, a ring of proteolipid subunits c9c'', rotary subunit d, subunits e and f, and the accessory subunits ATP6AP1/Ac45 and ATP6AP2/PRR. Interacts with SNX10.

Its subcellular location is the membrane. It is found in the cytoplasmic vesicle. The protein localises to the clathrin-coated vesicle membrane. It localises to the cytoplasm. The protein resides in the cytoskeleton. Its subcellular location is the microtubule organizing center. It is found in the centrosome. The protein localises to the cell projection. It localises to the cilium. Subunit of the V1 complex of vacuolar(H+)-ATPase (V-ATPase), a multisubunit enzyme composed of a peripheral complex (V1) that hydrolyzes ATP and a membrane integral complex (V0) that translocates protons. V-ATPase is responsible for acidifying and maintaining the pH of intracellular compartments and in some cell types, is targeted to the plasma membrane, where it is responsible for acidifying the extracellular environment. May play a role in cilium biogenesis through regulation of the transport and the localization of proteins to the cilium. This chain is V-type proton ATPase subunit D (ATP6V1D), found in Homo sapiens (Human).